The sequence spans 304 residues: UDP-3-O-acyl-N-acetylglucosamine deacetylase (304 aa).

Residues H79, H238, and D242 each coordinate Zn(2+). Residue H265 is the Proton donor of the active site.

The protein belongs to the LpxC family. Zn(2+) serves as cofactor.

The enzyme catalyses a UDP-3-O-[(3R)-3-hydroxyacyl]-N-acetyl-alpha-D-glucosamine + H2O = a UDP-3-O-[(3R)-3-hydroxyacyl]-alpha-D-glucosamine + acetate. It functions in the pathway glycolipid biosynthesis; lipid IV(A) biosynthesis; lipid IV(A) from (3R)-3-hydroxytetradecanoyl-[acyl-carrier-protein] and UDP-N-acetyl-alpha-D-glucosamine: step 2/6. In terms of biological role, catalyzes the hydrolysis of UDP-3-O-myristoyl-N-acetylglucosamine to form UDP-3-O-myristoylglucosamine and acetate, the committed step in lipid A biosynthesis. The sequence is that of UDP-3-O-acyl-N-acetylglucosamine deacetylase from Pseudoalteromonas atlantica (strain T6c / ATCC BAA-1087).